The following is a 352-amino-acid chain: tRNA uridine(34) hydroxylase (352 aa).

A Rhodanese domain is found at 144-238 (SDPDVILIDT…YLEEVPASDS (95 aa)). Cysteine 198 functions as the Cysteine persulfide intermediate in the catalytic mechanism.

Belongs to the TrhO family.

The catalysed reaction is uridine(34) in tRNA + AH2 + O2 = 5-hydroxyuridine(34) in tRNA + A + H2O. Its function is as follows. Catalyzes oxygen-dependent 5-hydroxyuridine (ho5U) modification at position 34 in tRNAs. This chain is tRNA uridine(34) hydroxylase, found in Psychrobacter arcticus (strain DSM 17307 / VKM B-2377 / 273-4).